A 404-amino-acid polypeptide reads, in one-letter code: DNA gyrase subunit B (404 aa).

One can recognise a Toprim domain in the interval 321–404 (SEIYIVEGDS…VIIMTDADVD (84 aa)). Mg(2+) contacts are provided by Glu327, Asp400, and Asp402.

The protein belongs to the type II topoisomerase GyrB family. In terms of assembly, heterotetramer, composed of two GyrA and two GyrB chains. In the heterotetramer, GyrA contains the active site tyrosine that forms a transient covalent intermediate with DNA, while GyrB binds cofactors and catalyzes ATP hydrolysis. Mg(2+) serves as cofactor. Mn(2+) is required as a cofactor. Requires Ca(2+) as cofactor.

The protein localises to the cytoplasm. The catalysed reaction is ATP-dependent breakage, passage and rejoining of double-stranded DNA.. A type II topoisomerase that negatively supercoils closed circular double-stranded (ds) DNA in an ATP-dependent manner to modulate DNA topology and maintain chromosomes in an underwound state. Negative supercoiling favors strand separation, and DNA replication, transcription, recombination and repair, all of which involve strand separation. Also able to catalyze the interconversion of other topological isomers of dsDNA rings, including catenanes and knotted rings. Type II topoisomerases break and join 2 DNA strands simultaneously in an ATP-dependent manner. The chain is DNA gyrase subunit B (gyrB) from Bacillus mycoides.